The following is a 235-amino-acid chain: Biosynthetic peptidoglycan transglycosylase (235 aa).

A helical membrane pass occupies residues 12–34 (GLGKLLLAALLSTIVSVALLRFI).

Belongs to the glycosyltransferase 51 family.

The protein resides in the cell inner membrane. It catalyses the reaction [GlcNAc-(1-&gt;4)-Mur2Ac(oyl-L-Ala-gamma-D-Glu-L-Lys-D-Ala-D-Ala)](n)-di-trans,octa-cis-undecaprenyl diphosphate + beta-D-GlcNAc-(1-&gt;4)-Mur2Ac(oyl-L-Ala-gamma-D-Glu-L-Lys-D-Ala-D-Ala)-di-trans,octa-cis-undecaprenyl diphosphate = [GlcNAc-(1-&gt;4)-Mur2Ac(oyl-L-Ala-gamma-D-Glu-L-Lys-D-Ala-D-Ala)](n+1)-di-trans,octa-cis-undecaprenyl diphosphate + di-trans,octa-cis-undecaprenyl diphosphate + H(+). It functions in the pathway cell wall biogenesis; peptidoglycan biosynthesis. In terms of biological role, peptidoglycan polymerase that catalyzes glycan chain elongation from lipid-linked precursors. This Aeromonas hydrophila subsp. hydrophila (strain ATCC 7966 / DSM 30187 / BCRC 13018 / CCUG 14551 / JCM 1027 / KCTC 2358 / NCIMB 9240 / NCTC 8049) protein is Biosynthetic peptidoglycan transglycosylase.